A 141-amino-acid chain; its full sequence is Lutropin subunit beta (141 aa).

An N-terminal signal peptide occupies residues 1 to 20 (MEMLQGLLLLMLLSMGGTWA). Intrachain disulfides connect Cys-29–Cys-77, Cys-43–Cys-92, Cys-46–Cys-130, Cys-54–Cys-108, Cys-58–Cys-110, and Cys-113–Cys-120. Residues Asn-33 and Asn-50 are each glycosylated (N-linked (GlcNAc...) asparagine).

Belongs to the glycoprotein hormones subunit beta family. As to quaternary structure, heterodimer of a common alpha chain and a unique beta chain which confers biological specificity to thyrotropin, lutropin, follitropin and gonadotropin.

The protein resides in the secreted. In terms of biological role, promotes spermatogenesis and ovulation by stimulating the testes and ovaries to synthesize steroids. This chain is Lutropin subunit beta (LHB), found in Pongo pygmaeus (Bornean orangutan).